The following is a 294-amino-acid chain: Cell division protein ZipA (294 aa).

A topological domain (periplasmic) is located at residue M1. The chain crosses the membrane as a helical span at residues 2-22; the sequence is EIGLREWLILIGIIVIAGILF. The Cytoplasmic segment spans residues 23–294; sequence DGWRRMRGGK…FERRALTQKR (272 aa). A disordered region spans residues 47 to 107; that stretch reads PDEEGSAEVL…GKRAAEMQPQ (61 aa). Basic and acidic residues predominate over residues 82 to 91; that stretch reads AREREREQKP.

The protein belongs to the ZipA family. Interacts with FtsZ via their C-terminal domains.

It is found in the cell inner membrane. In terms of biological role, essential cell division protein that stabilizes the FtsZ protofilaments by cross-linking them and that serves as a cytoplasmic membrane anchor for the Z ring. Also required for the recruitment to the septal ring of downstream cell division proteins. This Pseudomonas putida (strain W619) protein is Cell division protein ZipA.